The primary structure comprises 137 residues: Cofilin (137 aa).

One can recognise an ADF-H domain in the interval 5–135 (GVKVSPECLE…AYETVLEKVT (131 aa)).

Belongs to the actin-binding proteins ADF family.

It localises to the cytoplasm. The protein resides in the cytoskeleton. The protein localises to the nucleus matrix. Controls reversibly actin polymerization and depolymerization in a pH-sensitive manner. It has the ability to bind G- and F-actin in a 1:1 ratio of cofilin to actin. Binding to F-actin is regulated by tropomyosin. It is the major component of intranuclear and cytoplasmic actin rods. Required for accumulation of actin at the cell division site via depolymerizing actin at the cell ends. In association with myosin II has a role in the assembly of the contractile ring via severing actin filaments. Involved in the maintenance of the contractile ring once formed. In association with profilin and capping protein, has a role in the mitotic reorganization of the actin cytoskeleton. Severs actin filaments (F-actin). The polypeptide is Cofilin (cof1) (Schizosaccharomyces pombe (strain 972 / ATCC 24843) (Fission yeast)).